The primary structure comprises 72 residues: uncharacterized protein (72 aa).

This is an uncharacterized protein from Vaccinia virus (strain Copenhagen) (VACV).